Here is a 110-residue protein sequence, read N- to C-terminus: UPF0122 protein GK1195 (110 aa).

The protein belongs to the UPF0122 family.

Might take part in the signal recognition particle (SRP) pathway. This is inferred from the conservation of its genetic proximity to ftsY/ffh. May be a regulatory protein. This Geobacillus kaustophilus (strain HTA426) protein is UPF0122 protein GK1195.